A 459-amino-acid polypeptide reads, in one-letter code: Inositol-trisphosphate 3-kinase A (459 aa).

A disordered region spans residues 1–26; the sequence is MTLPGHPTGMARPRGAGPCSPGLERA. Omega-N-methylarginine is present on residues Arg35, Arg55, and Arg62. A disordered region spans residues 49 to 164; that stretch reads AAAGEPRARG…TSEDVGQKSH (116 aa). The segment covering 116 to 132 has biased composition (low complexity); that stretch reads RRLSTSSLSSTGSSSLL. Ser135 and Ser195 each carry phosphoserine. ATP-binding positions include Ser195, Lys207, 247 to 249, and Asp260; that span reads QDL. Substrate is bound by residues Lys262 and Arg283. Positions 285–293 are calmodulin-binding; that stretch reads DMYKKMLAV. 310–317 is a substrate binding site; sequence KPRYMQWR. The ATP site is built by Lys334 and Asp414. Substrate is bound at residue Lys417.

Belongs to the inositol phosphokinase (IPK) family.

The protein localises to the cytoplasm. It localises to the cytoskeleton. The catalysed reaction is 1D-myo-inositol 1,4,5-trisphosphate + ATP = 1D-myo-inositol 1,3,4,5-tetrakisphosphate + ADP + H(+). Its activity is regulated as follows. Activated by calcium/calmodulin. Catalyzes the phosphorylation of 1D-myo-inositol 1,4,5-trisphosphate (InsP3) into 1D-myo-inositol 1,3,4,5-tetrakisphosphate and participates to the regulation of calcium homeostasis. This chain is Inositol-trisphosphate 3-kinase A, found in Rattus norvegicus (Rat).